The chain runs to 133 residues: Small ribosomal subunit protein uS11 (133 aa).

Residues 1-23 (MPPKTRGAVRKPRKKDKKNIALG) form a disordered region. Residues 7-17 (GAVRKPRKKDK) are compositionally biased toward basic residues.

The protein belongs to the universal ribosomal protein uS11 family. In terms of assembly, part of the 30S ribosomal subunit. Interacts with proteins S7 and S18. Binds to IF-3.

Its function is as follows. Located on the platform of the 30S subunit, it bridges several disparate RNA helices of the 16S rRNA. Forms part of the Shine-Dalgarno cleft in the 70S ribosome. The sequence is that of Small ribosomal subunit protein uS11 from Pseudarthrobacter chlorophenolicus (strain ATCC 700700 / DSM 12829 / CIP 107037 / JCM 12360 / KCTC 9906 / NCIMB 13794 / A6) (Arthrobacter chlorophenolicus).